The primary structure comprises 252 residues: Pimeloyl-[acyl-carrier protein] methyl ester esterase (252 aa).

An AB hydrolase-1 domain is found at 15–239; the sequence is LVMLHGWAMH…FPHCGHAPFL (225 aa). Residues tryptophan 21, 81-82, and 143-147 each bind substrate; these read SL and FLTLQ. Serine 81 (nucleophile) is an active-site residue. Active-site residues include aspartate 207 and histidine 235. Histidine 235 contacts substrate.

It belongs to the AB hydrolase superfamily. Carboxylesterase BioH family. In terms of assembly, monomer.

The protein localises to the cytoplasm. The catalysed reaction is 6-carboxyhexanoyl-[ACP] methyl ester + H2O = 6-carboxyhexanoyl-[ACP] + methanol + H(+). The protein operates within cofactor biosynthesis; biotin biosynthesis. Functionally, the physiological role of BioH is to remove the methyl group introduced by BioC when the pimeloyl moiety is complete. It allows to synthesize pimeloyl-ACP via the fatty acid synthetic pathway through the hydrolysis of the ester bonds of pimeloyl-ACP esters. This Nitrosomonas europaea (strain ATCC 19718 / CIP 103999 / KCTC 2705 / NBRC 14298) protein is Pimeloyl-[acyl-carrier protein] methyl ester esterase.